The chain runs to 180 residues: Segregation and condensation protein B (180 aa).

Belongs to the ScpB family. Homodimer. Homodimerization may be required to stabilize the binding of ScpA to the Smc head domains. Component of a cohesin-like complex composed of ScpA, ScpB and the Smc homodimer, in which ScpA and ScpB bind to the head domain of Smc. The presence of the three proteins is required for the association of the complex with DNA.

It is found in the cytoplasm. Functionally, participates in chromosomal partition during cell division. May act via the formation of a condensin-like complex containing Smc and ScpA that pull DNA away from mid-cell into both cell halves. This chain is Segregation and condensation protein B, found in Staphylococcus epidermidis (strain ATCC 35984 / DSM 28319 / BCRC 17069 / CCUG 31568 / BM 3577 / RP62A).